Consider the following 190-residue polypeptide: Threonylcarbamoyl-AMP synthase (190 aa).

Positions 7-190 constitute a YrdC-like domain; that stretch reads LGSIAQAVDV…ALTGERFRQG (184 aa).

The protein belongs to the SUA5 family. TsaC subfamily.

It localises to the cytoplasm. The catalysed reaction is L-threonine + hydrogencarbonate + ATP = L-threonylcarbamoyladenylate + diphosphate + H2O. Required for the formation of a threonylcarbamoyl group on adenosine at position 37 (t(6)A37) in tRNAs that read codons beginning with adenine. Catalyzes the conversion of L-threonine, HCO(3)(-)/CO(2) and ATP to give threonylcarbamoyl-AMP (TC-AMP) as the acyladenylate intermediate, with the release of diphosphate. In Enterobacter sp. (strain 638), this protein is Threonylcarbamoyl-AMP synthase.